Consider the following 203-residue polypeptide: ADP-ribosylation factor-like protein 6-interacting protein 1 (203 aa).

Residues 1-41 (MAEGDNRSSNLLAVETASLEEQLQGWGEVMLMADKVLRWER) are Cytoplasmic-facing. The chain crosses the membrane as a helical span at residues 42 to 62 (AWFPPAIMGVVSLLFLIIYYL). The Lumenal portion of the chain corresponds to 63–65 (DPS). Residues 66–86 (VLSGVSCFVMFLCLADYLVPI) form a helical membrane-spanning segment. Over 87 to 133 (LAPRIFGSNKWTTEQQQRFHEICSNLVKTRRRAVGWWKRLFSLKEEK) the chain is Cytoplasmic. A helical membrane pass occupies residues 134–175 (PKMYFMTMIISLAAVAWVGQQVHNLLLTYLIVTFVLLLPGLN). The Lumenal portion of the chain corresponds to 176-203 (QHGIILKYIGMAKREINKLLKQKEKKNE).

This sequence belongs to the ARL6ip family. In terms of assembly, homooligomer. Heterodimer with ARL6IP5. Interacts with ARL6. Interacts with TMEM33. Interacts with ATL1. As to expression, expressed in the cerebral cortex, cerebellum, hippocampus, olfactory bulbs, medulla oblongate and limbic system (at protein level). Ubiquitous. Expressed in all hematopoietic cell lineages, with highest levels in early myeloid progenitor cells.

It localises to the endomembrane system. Its subcellular location is the endoplasmic reticulum membrane. It is found in the endoplasmic reticulum. In terms of biological role, positively regulates SLC1A1/EAAC1-mediated glutamate transport by increasing its affinity for glutamate in a PKC activity-dependent manner. Promotes the catalytic efficiency of SLC1A1/EAAC1 probably by reducing its interaction with ARL6IP5, a negative regulator of SLC1A1/EAAC1-mediated glutamate transport. Plays a role in the formation and stabilization of endoplasmic reticulum tubules. Negatively regulates apoptosis, possibly by modulating the activity of caspase-9 (CASP9). Inhibits cleavage of CASP9-dependent substrates and downstream markers of apoptosis but not CASP9 itself. May be involved in protein transport, membrane trafficking, or cell signaling during hematopoietic maturation. This chain is ADP-ribosylation factor-like protein 6-interacting protein 1 (Arl6ip1), found in Mus musculus (Mouse).